Here is a 449-residue protein sequence, read N- to C-terminus: C4-dicarboxylate transport protein 1 (449 aa).

Helical transmembrane passes span 14-34 (SIFL…VGIP), 47-67 (FIKL…VNGI), 83-103 (SVIY…VVAY), 157-177 (ILQV…VGEQ), 195-215 (IMGM…AFTT), 226-246 (LGAL…AVLG), 312-332 (FSIY…TPLA), 359-379 (VILA…LVLV), and 385-405 (FMGI…TVTI).

This sequence belongs to the dicarboxylate/amino acid:cation symporter (DAACS) (TC 2.A.23) family.

It is found in the cell inner membrane. Its function is as follows. Responsible for the transport of dicarboxylates such as succinate, fumarate, and malate from the periplasm across the membrane. The polypeptide is C4-dicarboxylate transport protein 1 (Pseudomonas aeruginosa (strain UCBPP-PA14)).